Reading from the N-terminus, the 622-residue chain is Membrane protein insertase YidC (622 aa).

Residues 6–26 (FIAVVLSVLVLVGASFLQELL) form a helical membrane-spanning segment. Residues 37 to 71 (AEHTLSAVPEETRTQSAHGGAADTQETTQPAAHPS) are disordered. 4 helical membrane-spanning segments follow: residues 413–433 (LIPN…VLFF), 483–503 (LSGC…YRLF), 513–533 (MFIP…TLPF), and 579–599 (VMPL…LVYW).

The protein belongs to the OXA1/ALB3/YidC family. Type 1 subfamily. Interacts with the Sec translocase complex via SecD. Specifically interacts with transmembrane segments of nascent integral membrane proteins during membrane integration.

It is found in the cell inner membrane. Required for the insertion and/or proper folding and/or complex formation of integral membrane proteins into the membrane. Involved in integration of membrane proteins that insert both dependently and independently of the Sec translocase complex, as well as at least some lipoproteins. Aids folding of multispanning membrane proteins. In Treponema pallidum (strain Nichols), this protein is Membrane protein insertase YidC.